We begin with the raw amino-acid sequence, 399 residues long: Glucosamine kinase (399 aa).

ATP is bound by residues Lys98, 149 to 151 (EYL), and Asp156. Asp262 provides a ligand contact to D-glucosamine. Positions 267, 279, and 281 each coordinate Mg(2+). The Substrate specificity determinant motif motif lies at 366–381 (QVLREIIYAARHLPRW). A D-glucosamine-binding site is contributed by Glu370.

This sequence belongs to the actinobacterial glucosamine kinase family. As to quaternary structure, monomer. Mg(2+) serves as cofactor.

It carries out the reaction D-glucosamine + ATP = D-glucosamine 6-phosphate + ADP + H(+). In terms of biological role, catalyzes the ATP-dependent phosphorylation of D-glucosamine (GlcN) to D-glucosamine 6-phosphate. May be involved in the phosphorylation of acquired extracellular GlcN derived from the hydrolysis of chitosan, i.e., in the incorporation of exogenous GlcN into the bacterial GlcNAc metabolism. Is unable to phosphorylate maltose. This chain is Glucosamine kinase, found in Mycolicibacterium smegmatis (strain ATCC 700084 / mc(2)155) (Mycobacterium smegmatis).